The sequence spans 180 residues: NADH-quinone oxidoreductase subunit I (180 aa).

4Fe-4S ferredoxin-type domains follow at residues 48 to 80 (IVLT…LQKA) and 90 to 119 (EFFR…LTPD). [4Fe-4S] cluster-binding residues include Cys60, Cys63, Cys66, Cys70, Cys99, Cys102, Cys105, and Cys109. Basic and acidic residues predominate over residues 161-174 (KPKGDAEHEAKPID). The tract at residues 161 to 180 (KPKGDAEHEAKPIDVKSLLP) is disordered.

This sequence belongs to the complex I 23 kDa subunit family. NDH-1 is composed of 14 different subunits. Subunits NuoA, H, J, K, L, M, N constitute the membrane sector of the complex. The cofactor is [4Fe-4S] cluster.

The protein localises to the cell inner membrane. It catalyses the reaction a quinone + NADH + 5 H(+)(in) = a quinol + NAD(+) + 4 H(+)(out). NDH-1 shuttles electrons from NADH, via FMN and iron-sulfur (Fe-S) centers, to quinones in the respiratory chain. The immediate electron acceptor for the enzyme in this species is believed to be ubiquinone. Couples the redox reaction to proton translocation (for every two electrons transferred, four hydrogen ions are translocated across the cytoplasmic membrane), and thus conserves the redox energy in a proton gradient. The protein is NADH-quinone oxidoreductase subunit I of Aeromonas salmonicida (strain A449).